Reading from the N-terminus, the 78-residue chain is Large ribosomal subunit protein bL28 (78 aa).

Positions 1–21 (MSRVCQVTGKRPMSGNNRSHA) are disordered.

This sequence belongs to the bacterial ribosomal protein bL28 family.

This chain is Large ribosomal subunit protein bL28, found in Photorhabdus laumondii subsp. laumondii (strain DSM 15139 / CIP 105565 / TT01) (Photorhabdus luminescens subsp. laumondii).